The chain runs to 178 residues: Large ribosomal subunit protein uL16 (178 aa).

It belongs to the universal ribosomal protein uL16 family.

The protein is Large ribosomal subunit protein uL16 of Saccharolobus solfataricus (strain ATCC 35092 / DSM 1617 / JCM 11322 / P2) (Sulfolobus solfataricus).